A 121-amino-acid chain; its full sequence is Large ribosomal subunit protein uL22 (121 aa).

This sequence belongs to the universal ribosomal protein uL22 family. Part of the 50S ribosomal subunit.

Its function is as follows. This protein binds specifically to 23S rRNA; its binding is stimulated by other ribosomal proteins, e.g. L4, L17, and L20. It is important during the early stages of 50S assembly. It makes multiple contacts with different domains of the 23S rRNA in the assembled 50S subunit and ribosome. The globular domain of the protein is located near the polypeptide exit tunnel on the outside of the subunit, while an extended beta-hairpin is found that lines the wall of the exit tunnel in the center of the 70S ribosome. The sequence is that of Large ribosomal subunit protein uL22 from Synechococcus sp. (strain CC9605).